Here is a 200-residue protein sequence, read N- to C-terminus: Isochorismatase family protein 2A (200 aa).

The protein belongs to the isochorismatase family.

This Dictyostelium discoideum (Social amoeba) protein is Isochorismatase family protein 2A.